We begin with the raw amino-acid sequence, 241 residues long: Viral CASP8 and FADD-like apoptosis regulator (241 aa).

2 consecutive DED domains span residues 8–78 (PSLP…SRFG) and 95–175 (RYRK…QLVE). The interval 212–241 (CMPVQESSDSPELLRTPVQESSSDSPEQTT) is disordered. The span at 229–241 (VQESSSDSPEQTT) shows a compositional bias: polar residues.

Associates with the death-inducing signaling complex (DISC) formed by TNFRSF6/FAS, FADD and CASP8. Interacts with FADD. Interacts with host TRAF2. Interacts with host NEMO/IKBKG (via N-terminus). Interacts with host SH3BP4; this interaction plays an important in the suppression of host autophagy.

The protein localises to the host cytoplasm. It localises to the host nucleus. Functionally, inhibits TNFRSF1A, TNFRSF6/FAS and TNFRSF12 induced apoptosis. Directs the degradation of host NFKBIB but not NFKBIA. Also suppresses host NF-kappa-B activation by interacting with and preventing ubiquitination of host NEMO/IKBKG, the NF-kappa-B essential modulator subunit of the IKK complex. Interferes with host CASP8/caspase-8 recruitment and activation at the death-inducing signaling complex (DISC). May lead to higher virus production and contribute to virus persistence and oncogenicity. Also participates in the inhibition of host autophagy by interacting with host SH3BP4. The polypeptide is Viral CASP8 and FADD-like apoptosis regulator (Homo sapiens (Human)).